The following is a 476-amino-acid chain: Serine--tRNA ligase (476 aa).

279 to 281 (TAE) contributes to the L-serine binding site. 310-312 (RAE) lines the ATP pocket. Glu-333 lines the L-serine pocket. Residue 400–403 (EISS) participates in ATP binding. Ser-435 is an L-serine binding site.

Belongs to the class-II aminoacyl-tRNA synthetase family. Type-1 seryl-tRNA synthetase subfamily. Homodimer. The tRNA molecule binds across the dimer.

The protein resides in the cytoplasm. It catalyses the reaction tRNA(Ser) + L-serine + ATP = L-seryl-tRNA(Ser) + AMP + diphosphate + H(+). It carries out the reaction tRNA(Sec) + L-serine + ATP = L-seryl-tRNA(Sec) + AMP + diphosphate + H(+). The protein operates within aminoacyl-tRNA biosynthesis; selenocysteinyl-tRNA(Sec) biosynthesis; L-seryl-tRNA(Sec) from L-serine and tRNA(Sec): step 1/1. Functionally, catalyzes the attachment of serine to tRNA(Ser). Is also able to aminoacylate tRNA(Sec) with serine, to form the misacylated tRNA L-seryl-tRNA(Sec), which will be further converted into selenocysteinyl-tRNA(Sec). The protein is Serine--tRNA ligase of Rhodopseudomonas palustris (strain BisA53).